Here is a 352-residue protein sequence, read N- to C-terminus: MKPALLEVMRMNRICRMVLATCFGSFILVIFYFQSMLHPVMRRNPFGVDICCRKGSRSPLQELYNPIQLELSNTAILHQMRRDQVTDTCRANSAMSRKRRVLTPNDLKHLVVDEDHELIYCYVPKVACTNWKRLMMVLSGRGKYSDPMEIPANEAHVSANLKTLNQYSIPEINHRLKSYMKFLFVREPFERLVSAYRNKFTQKYNTSFHKRYGTKIIRRQRKNATQEALRKGDDVKFEEFVAYLIDPHTQREEPFNEHWQTVYSLCHPCHIHYDLVGKYETLEEDSNYVLQLAGVSGYLKFPTYAKSTRTTDEMTTEFFQNISAEHQTQLYEVYKLDFLMFNYSVPNYLKLD.

Residues 1–16 (MKPALLEVMRMNRICR) are Cytoplasmic-facing. The chain crosses the membrane as a helical; Signal-anchor for type II membrane protein span at residues 17–37 (MVLATCFGSFILVIFYFQSML). Over 38-352 (HPVMRRNPFG…YSVPNYLKLD (315 aa)) the chain is Lumenal. Residues 124–130 (PKVACTN) and 186–194 (REPFERLVS) each bind 3'-phosphoadenylyl sulfate. N-linked (GlcNAc...) asparagine glycans are attached at residues Asn205, Asn223, Asn321, and Asn342.

This sequence belongs to the sulfotransferase 2 family. In terms of processing, N-glycosylated; required for activity and stability. As to expression, predominantly expressed in brain and kidney. Also expressed at weaker level in heart, spleen and lung. Expressed in developing chondrocytes.

The protein resides in the golgi apparatus membrane. It catalyses the reaction chondroitin beta-D-glucuronate + n 3'-phosphoadenylyl sulfate = chondroitin 4'-sulfate + n adenosine 3',5'-bisphosphate + n H(+). Its function is as follows. Catalyzes the transfer of sulfate to position 4 of the N-acetylgalactosamine (GalNAc) residue of chondroitin. Chondroitin sulfate constitutes the predominant proteoglycan present in cartilage and is distributed on the surfaces of many cells and extracellular matrices. Can also sulfate Gal residues in desulfated dermatan sulfate. Preferentially sulfates in GlcA-&gt;GalNAc unit than in IdoA-&gt;GalNAc unit. Does not form 4, 6-di-O-sulfated GalNAc when chondroitin sulfate C is used as an acceptor. The protein is Carbohydrate sulfotransferase 11 (Chst11) of Mus musculus (Mouse).